An 805-amino-acid polypeptide reads, in one-letter code: Transducer protein BasT (805 aa).

Helical transmembrane passes span F25–L45 and N296–G316. HAMP domains lie at R317–S370 and E437–A490. In terms of domain architecture, Methyl-accepting transducer spans S509–T745. Residues I513–D532 form a disordered region. The span at A516 to D526 shows a compositional bias: polar residues. 3 positions are modified to glutamate methyl ester (Glu): E554, E736, and E763. Positions A752–L779 are disordered. The segment covering E754–A773 has biased composition (low complexity).

The protein belongs to the methyl-accepting chemotaxis (MCP) protein family. Interacts with CheA, CheY, CheW1 and CheW2. Methylated by CheR.

It localises to the cell membrane. In terms of biological role, mediates chemotaxis towards five attractant amino acids (leucine, isoleucine, valine, methionine and cysteine). Probably transduces the signal from the substrate-binding protein BasB to the histidine kinase CheA. The polypeptide is Transducer protein BasT (basT) (Halobacterium salinarum (strain ATCC 29341 / DSM 671 / R1)).